The following is a 201-amino-acid chain: Anthranilate synthase component 2 (201 aa).

The Glutamine amidotransferase type-1 domain occupies 1–199 (MLLMIDNYDS…LRQQGGVRGE (199 aa)). L-glutamine is bound at residue 52 to 54 (GPC). The Nucleophile; for GATase activity role is filled by cysteine 79. Residues glutamine 83 and 129 to 130 (SL) contribute to the L-glutamine site. Catalysis depends on for GATase activity residues histidine 173 and glutamate 175.

In terms of assembly, heterotetramer consisting of two non-identical subunits: a beta subunit (TrpG) and a large alpha subunit (TrpE).

It catalyses the reaction chorismate + L-glutamine = anthranilate + pyruvate + L-glutamate + H(+). The protein operates within amino-acid biosynthesis; L-tryptophan biosynthesis; L-tryptophan from chorismate: step 1/5. Part of a heterotetrameric complex that catalyzes the two-step biosynthesis of anthranilate, an intermediate in the biosynthesis of L-tryptophan. In the first step, the glutamine-binding beta subunit (TrpG) of anthranilate synthase (AS) provides the glutamine amidotransferase activity which generates ammonia as a substrate that, along with chorismate, is used in the second step, catalyzed by the large alpha subunit of AS (TrpE) to produce anthranilate. In the absence of TrpG, TrpE can synthesize anthranilate directly from chorismate and high concentrations of ammonia. This Pseudomonas aeruginosa (strain ATCC 15692 / DSM 22644 / CIP 104116 / JCM 14847 / LMG 12228 / 1C / PRS 101 / PAO1) protein is Anthranilate synthase component 2.